We begin with the raw amino-acid sequence, 330 residues long: MQIESKTNTNIRSGLTLIAPFFLWGTAMVAMKGVLADTTPFFVATVRLIPAGILVLLWAMGQKRPQPQNWQGWGWIILFALVDGTLFQGFLAQGLERTGAGLGSVIIDSQPIAVALLSSWLFKEVIGGIGWLGLLLGVGGISLIGLPDEWFYQLWHLQGLSINWSGSALGSSGELWMLLASLSMAVGTVLIPFVSRRVDPVVATGWHMIIGGLPLLAIALVQDSEPWQNIDLWGWGNLAYATVFGSAIAYGIFFYLASKGNLTSLSSLTFLTPIFALSFSNLILEEQLSSLQWLGVAFTLVSIYLINQREQLKIQLRDIWSLVRKPVIND.

10 helical membrane passes run 15 to 35, 41 to 61, 72 to 92, 102 to 122, 125 to 145, 175 to 195, 201 to 221, 238 to 258, 264 to 284, and 286 to 306; these read LTLI…KGVL, FFVA…WAMG, GWGW…GFLA, LGSV…SWLF, VIGG…SLIG, LWML…PFVS, VVAT…IALV, LAYA…YLAS, SLSS…NLIL, and EQLS…IYLI. 2 EamA domains span residues 22–146 and 182–308; these read FLWG…LIGL and LSMA…LINQ.

The protein belongs to the EamA transporter family.

It is found in the cell membrane. This is an uncharacterized protein from Synechocystis sp. (strain ATCC 27184 / PCC 6803 / Kazusa).